The chain runs to 475 residues: Adenosylhomocysteinase (475 aa).

Substrate is bound by residues Thr-63, Asp-138, and Glu-199. 200-202 contacts NAD(+); that stretch reads TTT. Residues Lys-229 and Asp-233 each contribute to the substrate site. Residues Asn-234, 263 to 268, Glu-286, Asn-321, 342 to 344, and Asn-389 contribute to the NAD(+) site; these read GYGDVG and IGH.

Belongs to the adenosylhomocysteinase family. NAD(+) is required as a cofactor.

The protein localises to the cytoplasm. It carries out the reaction S-adenosyl-L-homocysteine + H2O = L-homocysteine + adenosine. The protein operates within amino-acid biosynthesis; L-homocysteine biosynthesis; L-homocysteine from S-adenosyl-L-homocysteine: step 1/1. In terms of biological role, may play a key role in the regulation of the intracellular concentration of adenosylhomocysteine. The chain is Adenosylhomocysteinase from Solibacter usitatus (strain Ellin6076).